The chain runs to 97 residues: Lipolysis-activating peptide 1-alpha chain (97 aa).

Positions 1–21 are cleaved as a signal peptide; the sequence is MNITLFCSVFILISLAGLSVS. An LCN-type CS-alpha/beta domain is found at 25–88; the sequence is PGNYPMSLYG…FWAAHKNHCK (64 aa). 3 cysteine pairs are disulfide-bonded: C39–C62, C48–C67, and C52–C69.

This sequence belongs to the long (3 C-C) scorpion toxin superfamily. As to quaternary structure, monomer (edited version) and heterodimer (non-edited version) of this alpha chain and a beta chain (AC D9U2A2). In terms of tissue distribution, expressed by the venom gland.

The protein resides in the secreted. In terms of biological role, the heterodimer non-edited LVP1 induces lipolysis in rat adipocytes. Induction of lipolysis by LVP1 appears to be mediated through the beta-2 adrenergic receptor pathway (ADRB2). Its function is as follows. The edited BmKBTx-like, similar to beta-toxins, may modulate voltage-gated sodium channels (Nav) and may block voltage-gated potassium channels (Kv). The polypeptide is Lipolysis-activating peptide 1-alpha chain (Lychas mucronatus (Chinese swimming scorpion)).